The following is a 316-amino-acid chain: Cyclin-dependent kinase inhibitor 1C (316 aa).

R107 carries the post-translational modification Omega-N-methylarginine. The disordered stretch occupies residues 124-153 (ESLDGLEEAPEQLPSVPVPAPASTPPPVPV). Over residues 139-153 (VPVPAPASTPPPVPV) the composition is skewed to pro residues. A run of 9 repeats spans residues 156-159 (PAPA), 160-163 (PAPA), 180-183 (PAPA), 184-187 (PAPA), 188-191 (PAPA), 198-201 (PAPA), 202-205 (PAPA), 206-209 (PAPA), and 210-213 (PAPA). Residues 156 to 213 (PAPAPAPAPVAAPVAAPVAVAVLAPAPAPAPAPAPAPAPVAAPAPAPAPAPAPAPAPA) are 9 X 4 AA repeats of P-A-P-A. Over residues 181 to 217 (APAPAPAPAPAPAPVAAPAPAPAPAPAPAPAPAPAPD) the composition is skewed to pro residues. The tract at residues 181–260 (APAPAPAPAP…AAGTAAASAN (80 aa)) is disordered. Positions 223–233 (SAEQGANQGQR) are enriched in polar residues. A compositionally biased stretch (low complexity) spans 251–260 (AAGTAAASAN). S268 carries the phosphoserine modification. The Nuclear localization signal motif lies at 278-281 (KRKR). Positions 278 to 316 (KRKRSAPEKSSGDVPAPCPSPSAAPGVGSVEQTPRKRLR) are disordered.

This sequence belongs to the CDI family. In terms of assembly, interacts with PCNA. As to expression, expressed in the heart, brain, lung, skeletal muscle, kidney, pancreas and testis. Expressed in the eye. High levels are seen in the placenta while low levels are seen in the liver.

The protein resides in the nucleus. Its function is as follows. Potent tight-binding inhibitor of several G1 cyclin/CDK complexes (cyclin E-CDK2, cyclin D2-CDK4, and cyclin A-CDK2) and, to lesser extent, of the mitotic cyclin B-CDC2. Negative regulator of cell proliferation. May play a role in maintenance of the non-proliferative state throughout life. This is Cyclin-dependent kinase inhibitor 1C (CDKN1C) from Homo sapiens (Human).